A 93-amino-acid polypeptide reads, in one-letter code: Small ribosomal subunit protein uS19 (93 aa).

The protein belongs to the universal ribosomal protein uS19 family.

Protein S19 forms a complex with S13 that binds strongly to the 16S ribosomal RNA. The chain is Small ribosomal subunit protein uS19 from Mycobacterium marinum (strain ATCC BAA-535 / M).